Reading from the N-terminus, the 428-residue chain is Cyclin-B1-1 (428 aa).

It belongs to the cyclin family. Cyclin AB subfamily. Interacts with FZR2/CCS52A1, FZR1/CCS52A2 and FZR3/CCS52B. As to expression, expressed in root tip, lateral root apex, shoot apex, leaf primordia, axillary buds, stamen and petal primordia, ovules and developing embryo.

It is found in the nucleus. This Arabidopsis thaliana (Mouse-ear cress) protein is Cyclin-B1-1 (CYCB1-1).